The following is a 124-amino-acid chain: Putative C(50) carotenoid beta-cyclase subunit A (124 aa).

Helical transmembrane passes span M1–D21, A34–V54, and F78–V98.

It belongs to the lycopene beta-cyclase family. May form a complex with LbtBC.

It localises to the cell membrane. It functions in the pathway carotenoid biosynthesis. Involved in the biosynthesis of C(50) beta-cyclic carotenoids. May have C(50) carotenoid beta-cyclase activity and produce the C(50) beta-cyclic carotenoid C.p.450 from the C(50) carotenoid dihydrobisanhydrobacterioruberin (DH-BABR). This chain is Putative C(50) carotenoid beta-cyclase subunit A, found in Dietzia sp. (strain CQ4).